The chain runs to 650 residues: Sodium-dependent phosphate transporter 2 (650 aa).

The Extracellular portion of the chain corresponds to 1 to 5; the sequence is MAMDG. The chain crosses the membrane as a helical span at residues 6 to 26; it reads YLWMVILGFIIAFILAFSVGA. The Cytoplasmic portion of the chain corresponds to 27–46; it reads NDVANSFGTAVGSGVVTLRQ. The helical transmembrane segment at 47-67 threads the bilayer; it reads ACILASIFETTGSVLLGAKVG. Residues 68–83 lie on the Extracellular side of the membrane; it reads ETIRKGIIDVNLYNDT. N81 is a glycosylation site (N-linked (GlcNAc...) asparagine). The helical transmembrane segment at 84-104 threads the bilayer; it reads VVTLMAGEVSAMVGSAVWQLI. Residues 105-109 are Cytoplasmic-facing; that stretch reads ASFLR. The helical transmembrane segment at 110 to 130 threads the bilayer; the sequence is LPISGTHCIVGSTIGFSLVAN. Residues 131–142 are Extracellular-facing; sequence GTKGVQWMELVK. The chain crosses the membrane as a helical span at residues 143-163; it reads IVASWFISPLLSGFMSGVLFV. Topologically, residues 164 to 192 are cytoplasmic; it reads LIRMFILTKEDPVPNGLQALPLFYAATIA. A helical transmembrane segment spans residues 193–212; it reads INVFSIMYTGAPVLGLSLPI. A topological domain (extracellular) is located at residue W213. A helical transmembrane segment spans residues 214–234; sequence AIALISFGVALLFAFFVWLFV. Residues 235–482 lie on the Cytoplasmic side of the membrane; the sequence is CPWMRRKIAG…EEKEEKDTAE (248 aa). Phosphoserine occurs at positions 253, 256, 259, 268, 315, and 384. Residues 268–310 are disordered; it reads SPFKELPGAKASDDSAVPLTNPTGEAVGPSEGTSTGNHPRTAY. A helical membrane pass occupies residues 483–503; sequence VHLLFHFLQVLTACFGSFAHG. Topologically, residues 504–530 are extracellular; it reads GNDVSNAIGPLVALWLIYEQGGVMQEA. Residues 531–551 traverse the membrane as a helical segment; sequence ATPVWLLFYGGVGICTGLWVW. The Cytoplasmic portion of the chain corresponds to 552–571; sequence GRRVIQTMGKDLTPITPSSG. The chain crosses the membrane as a helical span at residues 572 to 586; it reads FTIELASAFTVVIAS. The Extracellular segment spans residues 587-593; that stretch reads NIGLPVS. Residues 594 to 609 form a helical membrane-spanning segment; sequence TTHCKVGSVVAVGWIR. At 610–621 the chain is on the cytoplasmic side; sequence SRKAVDWHLFRN. Residues 622 to 642 traverse the membrane as a helical segment; that stretch reads IFVAWFVTVPVAGLFSAAIMA. The Extracellular segment spans residues 643–650; that stretch reads IFMYGILS.

Belongs to the inorganic phosphate transporter (PiT) (TC 2.A.20) family. Homodimer.

Its subcellular location is the cell membrane. It is found in the apical cell membrane. It catalyses the reaction 2 Na(+)(out) + phosphate(out) = 2 Na(+)(in) + phosphate(in). Sodium-phosphate symporter which preferentially transports the monovalent form of phosphate with a stoichiometry of two sodium ions per phosphate ion. Plays a critical role in the determination of bone quality and strength by providing phosphate for bone mineralization. Required to maintain normal cerebrospinal fluid phosphate levels. Mediates phosphate-induced calcification of vascular smooth muscle cells (VCMCs) and can functionally compensate for loss of SLC20A1 in VCMCs. Its function is as follows. (Microbial infection) Functions as a retroviral receptor and confers hamster cells susceptibility to infection to Gibbon Ape Leukemia Virus (GaLV) and amphotropic murine leukemia virus (A-MuLV). In Cricetulus griseus (Chinese hamster), this protein is Sodium-dependent phosphate transporter 2 (SLC20A2).